The chain runs to 738 residues: Phosphoribosylformylglycinamidine synthase subunit PurL (738 aa).

The active site involves histidine 53. ATP-binding residues include tyrosine 56 and lysine 95. Glutamate 97 serves as a coordination point for Mg(2+). Residues 98 to 101 (SHNH) and arginine 120 each bind substrate. Histidine 99 (proton acceptor) is an active-site residue. Aspartate 121 contacts Mg(2+). Glutamine 244 is a binding site for substrate. Aspartate 274 contacts Mg(2+). 318 to 320 (ESQ) contributes to the substrate binding site. Aspartate 499 and glycine 536 together coordinate ATP. Asparagine 537 is a binding site for Mg(2+). Serine 539 serves as a coordination point for substrate.

It belongs to the FGAMS family. As to quaternary structure, monomer. Part of the FGAM synthase complex composed of 1 PurL, 1 PurQ and 2 PurS subunits.

It is found in the cytoplasm. The catalysed reaction is N(2)-formyl-N(1)-(5-phospho-beta-D-ribosyl)glycinamide + L-glutamine + ATP + H2O = 2-formamido-N(1)-(5-O-phospho-beta-D-ribosyl)acetamidine + L-glutamate + ADP + phosphate + H(+). Its pathway is purine metabolism; IMP biosynthesis via de novo pathway; 5-amino-1-(5-phospho-D-ribosyl)imidazole from N(2)-formyl-N(1)-(5-phospho-D-ribosyl)glycinamide: step 1/2. Part of the phosphoribosylformylglycinamidine synthase complex involved in the purines biosynthetic pathway. Catalyzes the ATP-dependent conversion of formylglycinamide ribonucleotide (FGAR) and glutamine to yield formylglycinamidine ribonucleotide (FGAM) and glutamate. The FGAM synthase complex is composed of three subunits. PurQ produces an ammonia molecule by converting glutamine to glutamate. PurL transfers the ammonia molecule to FGAR to form FGAM in an ATP-dependent manner. PurS interacts with PurQ and PurL and is thought to assist in the transfer of the ammonia molecule from PurQ to PurL. This Lacticaseibacillus paracasei (strain ATCC 334 / BCRC 17002 / CCUG 31169 / CIP 107868 / KCTC 3260 / NRRL B-441) (Lactobacillus paracasei) protein is Phosphoribosylformylglycinamidine synthase subunit PurL.